We begin with the raw amino-acid sequence, 1223 residues long: WD repeat-containing protein 11 (1223 aa).

WD repeat units follow at residues 59–108 and 111–154; these read KHKA…AQCE and EHVK…KLWK. A phosphoserine mark is found at S205 and S209. The WD 3 repeat unit spans residues 354-393; it reads KTVRPFSMVCCPVNENAAALIVSDGRVMIWELKSAVCSRN. 2 positions are modified to phosphoserine: S401 and S405. WD repeat units lie at residues 470–509, 565–604, 707–744, 746–786, 792–830, and 892–939; these read RMCP…LHKE, NDES…LLRE, GSMG…SRGI, THRS…MVSS, NVTF…TCFR, and ALSN…HSLS.

In terms of assembly, component of the complex WDR11 composed of C17orf75, FAM91A1 and WDR11; FAM91A1 and WDR11 are required for proper location of the complex. Interacts with GLI3; the interaction associateS EMX1 with GLI3. Interacts with TBC1D23; this interaction may be indirect and recruits TBC1D23 to AP-1-derived vesicles. Interacts (via the N-terminal and the central portion of the protein) with EMX1. As to expression, broadly expressed in various organs including brain, eye,ear, lung, heart, kideny and gonads. Cerebral cortex. The entire developing central nervous system, except for the spinal cord, reveals expression. Expressed in the neuroepithelium, including the diencephalic region that gives rise to hypothalamic neurons. In the adult brain, intense expression is restricted to the olfactory bulb, the olfaction-related piriform cortex, the granule cell layer of the cerebellum, and neurons of the hippocampal formation. The brain demonstrated expression scattered throughout the hypothalamus, sometimes in clusters of neurons.

The protein resides in the cytoplasm. It localises to the cytoskeleton. It is found in the cilium basal body. The protein localises to the nucleus. Its subcellular location is the cilium axoneme. The protein resides in the cytoplasmic vesicle. It localises to the golgi apparatus. It is found in the trans-Golgi network. Involved in the Hedgehog (Hh) signaling pathway, is essential for normal ciliogenesis. Regulates the proteolytic processing of GLI3 and cooperates with the transcription factor EMX1 in the induction of downstream Hh pathway gene expression and gonadotropin-releasing hormone production. WDR11 complex facilitates the tethering of Adaptor protein-1 complex (AP-1)-derived vesicles. WDR11 complex acts together with TBC1D23 to facilitate the golgin-mediated capture of vesicles generated using AP-1. The polypeptide is WD repeat-containing protein 11 (Wdr11) (Mus musculus (Mouse)).